A 332-amino-acid chain; its full sequence is Ribosomal RNA small subunit methyltransferase C (332 aa).

This sequence belongs to the methyltransferase superfamily. RsmC family. As to quaternary structure, monomer.

Its subcellular location is the cytoplasm. It carries out the reaction guanosine(1207) in 16S rRNA + S-adenosyl-L-methionine = N(2)-methylguanosine(1207) in 16S rRNA + S-adenosyl-L-homocysteine + H(+). Specifically methylates the guanine in position 1207 of 16S rRNA in the 30S particle. The chain is Ribosomal RNA small subunit methyltransferase C from Pseudomonas aeruginosa (strain UCBPP-PA14).